A 1373-amino-acid chain; its full sequence is DNA-directed RNA polymerase subunit beta'' (1373 aa).

4 residues coordinate Zn(2+): C220, C293, C300, and C303.

The protein belongs to the RNA polymerase beta' chain family. RpoC2 subfamily. In terms of assembly, in plastids the minimal PEP RNA polymerase catalytic core is composed of four subunits: alpha, beta, beta', and beta''. When a (nuclear-encoded) sigma factor is associated with the core the holoenzyme is formed, which can initiate transcription. Requires Zn(2+) as cofactor.

It is found in the plastid. It localises to the chloroplast. The enzyme catalyses RNA(n) + a ribonucleoside 5'-triphosphate = RNA(n+1) + diphosphate. Its function is as follows. DNA-dependent RNA polymerase catalyzes the transcription of DNA into RNA using the four ribonucleoside triphosphates as substrates. This is DNA-directed RNA polymerase subunit beta'' from Lepidium virginicum (Virginia pepperweed).